The chain runs to 542 residues: Organic anion transporter 3 (542 aa).

The Cytoplasmic portion of the chain corresponds to 1 to 20 (MTFSEILDRVGSMGRFQFLH). Phosphoserine is present on Ser-4. A helical membrane pass occupies residues 21–41 (VAILGLPILNMANHNLLQIFT). At 42-123 (AATPVHHCRP…LVCNSNKLKE (82 aa)) the chain is on the extracellular side. The N-linked (GlcNAc...) asparagine glycan is linked to Asn-86. The chain crosses the membrane as a helical span at residues 124-144 (MAQSIFMAGILIGGLVLGDLS). Topologically, residues 145-154 (DRFGRRPILT) are cytoplasmic. Residues 155–175 (CSYLLLAASGSGAAFSPTFPI) traverse the membrane as a helical segment. Residue Tyr-176 is a topological domain, extracellular. A helical transmembrane segment spans residues 177–197 (MVFRFLCGFGISGITLSTVIL). Residues 198–212 (NVEWVPTRMRAIMST) are Cytoplasmic-facing. The chain crosses the membrane as a helical span at residues 213–233 (ALGYCYTFGQFILPGLAYAIP). The Extracellular segment spans residues 234–236 (QWR). The chain crosses the membrane as a helical span at residues 237–257 (WLQLTVSIPFFIFFLSSWWTP). Residues 258–327 (ESIRWLVLSG…FRIPMLRRMT (70 aa)) are Cytoplasmic-facing. Residues 328-348 (FCLSLAWFATGFAYYSLAMGV) form a helical membrane-spanning segment. Residues 349–354 (EEFGVN) are Extracellular-facing. The helical transmembrane segment at 355–375 (LYILQIIFGGVDVPAKFITIL) threads the bilayer. Residues 376–386 (SLSYLGRHTTQ) are Cytoplasmic-facing. Residues 387 to 407 (AAALLLAGGAILALTFVPLDL) traverse the membrane as a helical segment. Topologically, residues 408–471 (QTVRTVLAVF…LVKITGEVQP (64 aa)) are extracellular. The helical transmembrane segment at 472–492 (FIPNIIYGITALLGGSAAFFL) threads the bilayer. The Cytoplasmic portion of the chain corresponds to 493 to 542 (PETLNQPLPETIEDLENWSLRAKKPKQEPEVEKASQRIPLQPHGPGLGSS). The interval 515–542 (KKPKQEPEVEKASQRIPLQPHGPGLGSS) is disordered. Over residues 517-527 (PKQEPEVEKAS) the composition is skewed to basic and acidic residues.

Belongs to the major facilitator (TC 2.A.1) superfamily. Organic cation transporter (TC 2.A.1.19) family.

The protein localises to the basolateral cell membrane. It carries out the reaction estrone 3-sulfate(out) + glutarate(in) = estrone 3-sulfate(in) + glutarate(out). The enzyme catalyses estrone 3-sulfate(in) + 2-oxoglutarate(out) = estrone 3-sulfate(out) + 2-oxoglutarate(in). The catalysed reaction is glutarate(in) + 2-oxoglutarate(out) = glutarate(out) + 2-oxoglutarate(in). It catalyses the reaction urate(in) + 2-oxoglutarate(out) = urate(out) + 2-oxoglutarate(in). It carries out the reaction taurocholate(out) + glutarate(in) = taurocholate(in) + glutarate(out). The enzyme catalyses dehydroepiandrosterone 3-sulfate(out) + glutarate(in) = dehydroepiandrosterone 3-sulfate(in) + glutarate(out). The catalysed reaction is prostaglandin F2alpha(out) + glutarate(in) = prostaglandin F2alpha(in) + glutarate(out). It catalyses the reaction prostaglandin F2alpha(out) + 2-oxoglutarate(in) = prostaglandin F2alpha(in) + 2-oxoglutarate(out). It carries out the reaction (R)-carnitine(out) + 2-oxoglutarate(in) = (R)-carnitine(in) + 2-oxoglutarate(out). The enzyme catalyses glutarate(in) + (R)-carnitine(out) = glutarate(out) + (R)-carnitine(in). The catalysed reaction is prostaglandin E2(out) + 2-oxoglutarate(in) = prostaglandin E2(in) + 2-oxoglutarate(out). It catalyses the reaction prostaglandin E2(out) + glutarate(in) = prostaglandin E2(in) + glutarate(out). It carries out the reaction urate(in) + glutarate(out) = urate(out) + glutarate(in). The enzyme catalyses taurocholate(out) + 2-oxoglutarate(in) = taurocholate(in) + 2-oxoglutarate(out). The catalysed reaction is dehydroepiandrosterone 3-sulfate(out) + 2-oxoglutarate(in) = dehydroepiandrosterone 3-sulfate(in) + 2-oxoglutarate(out). It catalyses the reaction kynurenate(out) + a dicarboxylate(in) = kynurenate(in) + a dicarboxylate(out). It carries out the reaction (indol-3-yl)acetate(out) + a dicarboxylate(in) = (indol-3-yl)acetate(in) + a dicarboxylate(out). The enzyme catalyses indoxyl sulfate(out) + a dicarboxylate(in) = indoxyl sulfate(in) + a dicarboxylate(out). The catalysed reaction is N-benzoylglycine(out) + a dicarboxylate(in) = N-benzoylglycine(in) + a dicarboxylate(out). It catalyses the reaction 3-carboxy-4-methyl-5-propyl-2-furanpropanoate(out) + a dicarboxylate(in) = 3-carboxy-4-methyl-5-propyl-2-furanpropanoate(in) + a dicarboxylate(out). It carries out the reaction (6R)-L-erythro-5,6,7,8-tetrahydrobiopterin(out) + a dicarboxylate(in) = (6R)-L-erythro-5,6,7,8-tetrahydrobiopterin(in) + a dicarboxylate(out). The enzyme catalyses L-erythro-7,8-dihydrobiopterin(out) + a dicarboxylate(in) = L-erythro-7,8-dihydrobiopterin(in) + a dicarboxylate(out). The catalysed reaction is L-sepiapterin(out) + a dicarboxylate(in) = L-sepiapterin(in) + a dicarboxylate(out). Its function is as follows. Functions as an organic anion/dicarboxylate exchanger that couples organic anion uptake indirectly to the sodium gradient. Transports organic anions such as estrone 3-sulfate (E1S) and urate in exchange for dicarboxylates such as glutarate or ketoglutarate (2-oxoglutarate). Plays an important role in the excretion of endogenous and exogenous organic anions, especially from the kidney and the brain. E1S transport is pH- and chloride-dependent and may also involve E1S/cGMP exchange. Responsible for the transport of prostaglandin E2 (PGE2) and prostaglandin F2(alpha) (PGF2(alpha)) in the basolateral side of the renal tubule. Involved in the transport of neuroactive tryptophan metabolites kynurenate and xanthurenate. Functions as a biopterin transporters involved in the uptake and the secretion of coenzymes tetrahydrobiopterin (BH4), dihydrobiopterin (BH2) and sepiapterin to urine, thereby determining baseline levels of blood biopterins. May be involved in the basolateral transport of steviol, a metabolite of the popular sugar substitute stevioside. May participate in the detoxification/ renal excretion of drugs and xenobiotics, such as the histamine H(2)-receptor antagonists fexofenadine and cimetidine, the antibiotic benzylpenicillin (PCG), the anionic herbicide 2,4-dichloro-phenoxyacetate (2,4-D), the diagnostic agent p-aminohippurate (PAH), the antiviral acyclovir (ACV), and the mycotoxin ochratoxin (OTA), by transporting these exogenous organic anions across the cell membrane in exchange for dicarboxylates such as 2-oxoglutarate. Contributes to the renal uptake of potent uremic toxins (indoxyl sulfate (IS), indole acetate (IA), hippurate/N-benzoylglycine (HA) and 3-carboxy-4-methyl-5-propyl-2-furanpropionate (CMPF)), pravastatin, PCG, E1S and dehydroepiandrosterone sulfate (DHEAS), and is partly involved in the renal uptake of temocaprilat (an angiotensin-converting enzyme (ACE) inhibitor). May contribute to the release of cortisol in the adrenals. Involved in one of the detoxification systems on the choroid plexus (CP), removes substrates such as E1S or taurocholate (TC), PCG, 2,4-D and PAH, from the cerebrospinal fluid (CSF) to the blood for eventual excretion in urine and bile. Also contributes to the uptake of several other organic compounds such as the prostanoids prostaglandin E(2) and prostaglandin F(2-alpha), L-carnitine, and the therapeutic drugs allopurinol, 6-mercaptopurine (6-MP) and 5-fluorouracil (5-FU). Mediates the transport of PAH, PCG, and the statins pravastatin and pitavastatin, from the cerebrum into the blood circulation across the blood-brain barrier (BBB). In summary, plays a role in the efflux of drugs and xenobiotics, helping reduce their undesired toxicological effects on the body. The protein is Organic anion transporter 3 (SLC22A8) of Pongo abelii (Sumatran orangutan).